An 855-amino-acid chain; its full sequence is Cone cGMP-specific 3',5'-cyclic phosphodiesterase subunit alpha' (855 aa).

2 GAF domains span residues 70–219 (SVEL…SIIL) and 251–428 (DVER…GWSL). Residues S92, S116, 164 to 167 (DKQT), and T171 each bind 3',5'-cyclic GMP. The region spanning 481-814 (EEKQLVTILK…VEWKSLADEY (334 aa)) is the PDEase domain. H557 (proton donor) is an active-site residue. A divalent metal cation-binding residues include H561, H597, D598, and D718. Residues 823–855 (EMKKQEEGNTTEKAVEDSGGGGDDKKSKTCLML) form a disordered region. A Cysteine methyl ester modification is found at C852. C852 carries S-geranylgeranyl cysteine lipidation. A propeptide spans 853 to 855 (LML) (removed in mature form).

This sequence belongs to the cyclic nucleotide phosphodiesterase family. As to quaternary structure, composed of two alpha' subunits that are associated with 3 smaller proteins of 11, 13, and 15 kDa. A divalent metal cation is required as a cofactor.

It is found in the cell membrane. It catalyses the reaction 3',5'-cyclic GMP + H2O = GMP + H(+). As cone-specific cGMP phosphodiesterase, it plays an essential role in light detection and cone phototransduction by rapidly decreasing intracellular levels of cGMP. The chain is Cone cGMP-specific 3',5'-cyclic phosphodiesterase subunit alpha' (PDE6C) from Bos taurus (Bovine).